The sequence spans 554 residues: Phenylalanine--tRNA ligase beta subunit (554 aa).

The region spanning Leu276–Gly351 is the B5 domain. Mg(2+) is bound by residues Asp329, Asp335, Glu338, and Glu339.

Belongs to the phenylalanyl-tRNA synthetase beta subunit family. Type 2 subfamily. Tetramer of two alpha and two beta subunits. The cofactor is Mg(2+).

The protein resides in the cytoplasm. The enzyme catalyses tRNA(Phe) + L-phenylalanine + ATP = L-phenylalanyl-tRNA(Phe) + AMP + diphosphate + H(+). This Methanococcus maripaludis (strain DSM 14266 / JCM 13030 / NBRC 101832 / S2 / LL) protein is Phenylalanine--tRNA ligase beta subunit.